A 358-amino-acid polypeptide reads, in one-letter code: Serine/threonine-protein phosphatase 2A activator 2 (358 aa).

Belongs to the PTPA-type PPIase family.

It localises to the cytoplasm. The enzyme catalyses [protein]-peptidylproline (omega=180) = [protein]-peptidylproline (omega=0). PPIases accelerate the folding of proteins. It catalyzes the cis-trans isomerization of proline imidic peptide bonds in oligopeptides. Acts as a regulatory subunit for PP2A-like phosphatases modulating their activity or substrate specificity, probably by inducing a conformational change in the catalytic subunit, a direct target of the PPIase. Can reactivate inactive phosphatase PP2A-phosphatase methylesterase complexes (PP2Ai) in presence of ATP and Mg(2+) by dissociating the inactive form from the complex. This is Serine/threonine-protein phosphatase 2A activator 2 (RRD2) from Candida albicans (strain SC5314 / ATCC MYA-2876) (Yeast).